The primary structure comprises 272 residues: Dermonecrotic toxin LvSicTox-alphaIC1bv (272 aa).

H5 is an active-site residue. Mg(2+) contacts are provided by E25 and D27. H41 acts as the Nucleophile in catalysis. Cystine bridges form between C45–C51 and C47–C189. D84 contributes to the Mg(2+) binding site.

Belongs to the arthropod phospholipase D family. Class II subfamily. The cofactor is Mg(2+). In terms of tissue distribution, expressed by the venom gland.

It is found in the secreted. It catalyses the reaction an N-(acyl)-sphingosylphosphocholine = an N-(acyl)-sphingosyl-1,3-cyclic phosphate + choline. The catalysed reaction is an N-(acyl)-sphingosylphosphoethanolamine = an N-(acyl)-sphingosyl-1,3-cyclic phosphate + ethanolamine. The enzyme catalyses a 1-acyl-sn-glycero-3-phosphocholine = a 1-acyl-sn-glycero-2,3-cyclic phosphate + choline. It carries out the reaction a 1-acyl-sn-glycero-3-phosphoethanolamine = a 1-acyl-sn-glycero-2,3-cyclic phosphate + ethanolamine. Its function is as follows. Dermonecrotic toxins cleave the phosphodiester linkage between the phosphate and headgroup of certain phospholipids (sphingolipid and lysolipid substrates), forming an alcohol (often choline) and a cyclic phosphate. This toxin acts on sphingomyelin (SM). It may also act on ceramide phosphoethanolamine (CPE), lysophosphatidylcholine (LPC) and lysophosphatidylethanolamine (LPE), but not on lysophosphatidylserine (LPS), and lysophosphatidylglycerol (LPG). It acts by transphosphatidylation, releasing exclusively cyclic phosphate products as second products. Induces dermonecrosis, hemolysis, increased vascular permeability, edema, inflammatory response, and platelet aggregation. This is Dermonecrotic toxin LvSicTox-alphaIC1bv from Loxosceles variegata (Recluse spider).